The primary structure comprises 312 residues: Phosphoribosylaminoimidazole-succinocarboxamide synthase (312 aa).

It belongs to the SAICAR synthetase family.

It catalyses the reaction 5-amino-1-(5-phospho-D-ribosyl)imidazole-4-carboxylate + L-aspartate + ATP = (2S)-2-[5-amino-1-(5-phospho-beta-D-ribosyl)imidazole-4-carboxamido]succinate + ADP + phosphate + 2 H(+). Its pathway is purine metabolism; IMP biosynthesis via de novo pathway; 5-amino-1-(5-phospho-D-ribosyl)imidazole-4-carboxamide from 5-amino-1-(5-phospho-D-ribosyl)imidazole-4-carboxylate: step 1/2. The polypeptide is Phosphoribosylaminoimidazole-succinocarboxamide synthase (Legionella pneumophila (strain Paris)).